Reading from the N-terminus, the 392-residue chain is Mitochondrial distribution and morphology protein 10 (392 aa).

This sequence belongs to the MDM10 family. As to quaternary structure, component of the ER-mitochondria encounter structure (ERMES) or MDM complex, composed of MMM1, MDM10, MDM12 and MDM34. Associates with the mitochondrial outer membrane sorting assembly machinery SAM(core) complex.

Its subcellular location is the mitochondrion outer membrane. Its function is as follows. Component of the ERMES/MDM complex, which serves as a molecular tether to connect the endoplasmic reticulum and mitochondria. Components of this complex are involved in the control of mitochondrial shape and protein biogenesis and may function in phospholipid exchange. MDM10 is involved in the late assembly steps of the general translocase of the mitochondrial outer membrane (TOM complex). Functions in the TOM40-specific route of the assembly of outer membrane beta-barrel proteins, including the association of TOM40 with the receptor TOM22 and small TOM proteins. Can associate with the SAM(core) complex as well as the MDM12-MMM1 complex, both involved in late steps of the major beta-barrel assembly pathway, that is responsible for biogenesis of all outer membrane beta-barrel proteins. May act as a switch that shuttles between both complexes and channels precursor proteins into the TOM40-specific pathway. Plays a role in mitochondrial morphology and in the inheritance of mitochondria. The chain is Mitochondrial distribution and morphology protein 10 from Phaeosphaeria nodorum (strain SN15 / ATCC MYA-4574 / FGSC 10173) (Glume blotch fungus).